The chain runs to 75 residues: UPF0352 protein YejL (75 aa).

This sequence belongs to the UPF0352 family.

The chain is UPF0352 protein YejL from Shigella flexneri.